The sequence spans 358 residues: Feruloyl CoA ortho-hydroxylase F6H1-2 (358 aa).

The Fe2OG dioxygenase domain occupies 200-308; sequence TKESLLMGSK…RISVPIFVNP (109 aa). Position 216 (Y216) interacts with 2-oxoglutarate. Residues H231, D233, and H289 each coordinate Fe cation. R299 and S301 together coordinate 2-oxoglutarate.

The protein belongs to the iron/ascorbate-dependent oxidoreductase family. The cofactor is L-ascorbate. Fe(2+) serves as cofactor. In terms of tissue distribution, expressed at low levels in tubers, underground stems, leaves and petioles.

The catalysed reaction is (E)-feruloyl-CoA + 2-oxoglutarate + O2 = (E)-6-hydroxyferuloyl-CoA + succinate + CO2. Its pathway is phenylpropanoid metabolism. Its function is as follows. 2-oxoglutarate (OG)- and Fe(II)-dependent dioxygenase (2OGD) involved in scopoletin biosynthesis. Converts feruloyl CoA into 6'-hydroxyferuloyl CoA, and, at low efficiency, caffeoyl-CoA into 6'-hydroxycaffeate, but has no activity with p-coumaroyl-CoA. The polypeptide is Feruloyl CoA ortho-hydroxylase F6H1-2 (Ipomoea batatas (Sweet potato)).